Consider the following 109-residue polypeptide: Thiosulfate sulfurtransferase GlpE (109 aa).

Residues 16 to 104 (REQGAVVVDI…WRSTYPAETA (89 aa)) enclose the Rhodanese domain. The active-site Cysteine persulfide intermediate is the C64.

The protein belongs to the GlpE family.

It localises to the cytoplasm. The catalysed reaction is thiosulfate + hydrogen cyanide = thiocyanate + sulfite + 2 H(+). It catalyses the reaction thiosulfate + [thioredoxin]-dithiol = [thioredoxin]-disulfide + hydrogen sulfide + sulfite + 2 H(+). Its function is as follows. Transferase that catalyzes the transfer of sulfur from thiosulfate to thiophilic acceptors such as cyanide or dithiols. May function in a CysM-independent thiosulfate assimilation pathway by catalyzing the conversion of thiosulfate to sulfite, which can then be used for L-cysteine biosynthesis. The polypeptide is Thiosulfate sulfurtransferase GlpE (Pseudomonas fluorescens (strain ATCC BAA-477 / NRRL B-23932 / Pf-5)).